The following is a 362-amino-acid chain: Glutamate 5-kinase (362 aa).

Lys3 provides a ligand contact to ATP. Residues Ser43, Asp128, and Asn140 each coordinate substrate. Residues 160–161 and 202–208 each bind ATP; these read TD and TGGMRTK. The PUA domain maps to 267–348; it reads AGAILIDDGA…REIENVLGYS (82 aa).

Belongs to the glutamate 5-kinase family.

It is found in the cytoplasm. The enzyme catalyses L-glutamate + ATP = L-glutamyl 5-phosphate + ADP. It participates in amino-acid biosynthesis; L-proline biosynthesis; L-glutamate 5-semialdehyde from L-glutamate: step 1/2. In terms of biological role, catalyzes the transfer of a phosphate group to glutamate to form L-glutamate 5-phosphate. This Xanthomonas euvesicatoria pv. vesicatoria (strain 85-10) (Xanthomonas campestris pv. vesicatoria) protein is Glutamate 5-kinase.